Here is a 274-residue protein sequence, read N- to C-terminus: Energy-coupling factor transporter ATP-binding protein EcfA1 (274 aa).

Positions 11-245 (IELKNVKFKY…ERVIEIAKID (235 aa)) constitute an ABC transporter domain. 45-52 (GHNGSGKS) lines the ATP pocket.

It belongs to the ABC transporter superfamily. Energy-coupling factor EcfA family. Forms a stable energy-coupling factor (ECF) transporter complex composed of 2 membrane-embedded substrate-binding proteins (S component), 2 ATP-binding proteins (A component) and 2 transmembrane proteins (T component).

It localises to the cell membrane. Its function is as follows. ATP-binding (A) component of a common energy-coupling factor (ECF) ABC-transporter complex. Unlike classic ABC transporters this ECF transporter provides the energy necessary to transport a number of different substrates. The sequence is that of Energy-coupling factor transporter ATP-binding protein EcfA1 from Mycoplasma mobile (strain ATCC 43663 / 163K / NCTC 11711) (Mesomycoplasma mobile).